The chain runs to 252 residues: GTP cyclohydrolase 1 type 2 homolog (252 aa).

Residues His63, His64, Asp101, His220, and Glu224 each contribute to the a divalent metal cation site.

This sequence belongs to the GTP cyclohydrolase I type 2/NIF3 family. Homohexamer.

The chain is GTP cyclohydrolase 1 type 2 homolog from Vibrio cholerae serotype O1 (strain ATCC 39315 / El Tor Inaba N16961).